A 142-amino-acid polypeptide reads, in one-letter code: Hemoglobin subunit alpha-A (142 aa).

A Globin domain is found at V2 to R142. H59 lines the O2 pocket. A heme b-binding site is contributed by H88.

The protein belongs to the globin family. As to quaternary structure, heterotetramer of two alpha chains and two beta chains. In terms of tissue distribution, red blood cells.

Functionally, involved in oxygen transport from the lung to the various peripheral tissues. The protein is Hemoglobin subunit alpha-A (HBAA) of Anser indicus (Bar-headed goose).